Here is a 245-residue protein sequence, read N- to C-terminus: Ribonuclease 3 (245 aa).

The region spanning 19 to 148 (FKVFQEKIGI…FIGALYLDQG (130 aa)) is the RNase III domain. Glutamate 61 is a binding site for Mg(2+). Aspartate 65 is a catalytic residue. Aspartate 134 and glutamate 137 together coordinate Mg(2+). Residue glutamate 137 is part of the active site. The 70-residue stretch at 174–243 (DYKSQLQELI…AAEALKKLKE (70 aa)) folds into the DRBM domain.

This sequence belongs to the ribonuclease III family. In terms of assembly, homodimer. Requires Mg(2+) as cofactor.

It is found in the cytoplasm. The catalysed reaction is Endonucleolytic cleavage to 5'-phosphomonoester.. In terms of biological role, digests double-stranded RNA. Involved in the processing of primary rRNA transcript to yield the immediate precursors to the large and small rRNAs (23S and 16S). Processes some mRNAs, and tRNAs when they are encoded in the rRNA operon. Processes pre-crRNA and tracrRNA of type II CRISPR loci if present in the organism. The polypeptide is Ribonuclease 3 (Bacillus cereus (strain ZK / E33L)).